A 282-amino-acid chain; its full sequence is NADH-ubiquinone oxidoreductase chain 2 (282 aa).

A run of 7 helical transmembrane segments spans residues 17–37, 58–78, 87–107, 115–135, 166–186, 202–222, and 232–252; these read ILTN…VVFI, SLGL…IILL, FWIF…FLTF, ILLQ…LLIC, FSMF…VLLI, TTLV…IFSL, and FTLF…FWLI.

The protein belongs to the complex I subunit 2 family.

The protein localises to the mitochondrion inner membrane. The enzyme catalyses a ubiquinone + NADH + 5 H(+)(in) = a ubiquinol + NAD(+) + 4 H(+)(out). Core subunit of the mitochondrial membrane respiratory chain NADH dehydrogenase (Complex I) that is believed to belong to the minimal assembly required for catalysis. Complex I functions in the transfer of electrons from NADH to the respiratory chain. The immediate electron acceptor for the enzyme is believed to be ubiquinone. The sequence is that of NADH-ubiquinone oxidoreductase chain 2 from Caenorhabditis elegans.